Reading from the N-terminus, the 130-residue chain is Small ribosomal subunit protein uS9 (130 aa).

The protein belongs to the universal ribosomal protein uS9 family.

This chain is Small ribosomal subunit protein uS9, found in Cupriavidus pinatubonensis (strain JMP 134 / LMG 1197) (Cupriavidus necator (strain JMP 134)).